The following is a 580-amino-acid chain: High affinity choline transporter 1 (580 aa).

Topologically, residues 1 to 6 (MSFHVE) are extracellular. Residues 7-27 (GLVAIILFYLLIFLVGIWAAW) traverse the membrane as a helical segment. At 28–48 (KTKNSGNPEERSEAIIVGGRD) the chain is on the cytoplasmic side. A helical transmembrane segment spans residues 49-69 (IGLLVGGFTMTATWVGGGYIN). The Extracellular segment spans residues 70 to 81 (GTAEAVYGPGCG). Residues 82–102 (LAWAQAPIGYSLSLILGGLFF) traverse the membrane as a helical segment. At 103 to 125 (AKPMRSKGYVTMLDPFQQIYGKR) the chain is on the cytoplasmic side. A helical transmembrane segment spans residues 126–146 (MGGLLFIPALMGEMFWAAAIF). The Extracellular portion of the chain corresponds to 147-164 (SALGATISVIIDVDVNIS). Residues 165–185 (VIVSALIAILYTLVGGLYSVA) traverse the membrane as a helical segment. The Cytoplasmic segment spans residues 186–191 (YTDVVQ). Residues 192-212 (LFCIFIGLWISVPFALSHPAV) form a helical membrane-spanning segment. Over 213 to 237 (TDIGFTAVHAKYQSPWLGTIESVEV) the chain is Extracellular. Residues 238 to 258 (YTWLDNFLLLMLGGIPWQAYF) traverse the membrane as a helical segment. At 259-274 (QRVLSSSSATYAQVLS) the chain is on the cytoplasmic side. A helical transmembrane segment spans residues 275 to 295 (FLAAFGCLVMALPAICIGAIG). Over 296–317 (ASTDWNQTAYGYPDPKTKEEAD) the chain is Extracellular. The N-linked (GlcNAc...) asparagine glycan is linked to asparagine 301. Residues 318-338 (MILPIVLQYLCPVYISFFGLG) traverse the membrane as a helical segment. Residues 339–376 (AVSAAVMSSADSSILSASSMFARNIYQLSFRQNASDKE) lie on the Cytoplasmic side of the membrane. Residues 377–397 (IVWVMRITVLVFGASATAMAL) form a helical membrane-spanning segment. Residues 398-406 (LTKTVYGLW) are Extracellular-facing. Residues 407-427 (YLSSDLVYIIIFPQLLCVLFI) traverse the membrane as a helical segment. Residues 428–435 (KGTNTYGA) lie on the Cytoplasmic side of the membrane. Residues 436-456 (VAGYIFGLFLRITGGEPYLYL) traverse the membrane as a helical segment. At 457–481 (QPLIFYPGYYSDKNGIYNQRFPFKT) the chain is on the extracellular side. The helical transmembrane segment at 482–502 (LSMVTSFFTNICVSYLAKYLF) threads the bilayer. The mediates interaction with SEC14L1 stretch occupies residues 502-580 (FESGTLPPKL…EGSGTEDNLQ (79 aa)). The Cytoplasmic portion of the chain corresponds to 503-580 (ESGTLPPKLD…EGSGTEDNLQ (78 aa)). A Dileucine-like motif motif is present at residues 527 to 532 (DKTILV).

This sequence belongs to the sodium:solute symporter (SSF) (TC 2.A.21) family. Homooligomerizes at cell surface. Interacts with SEC14L1; may regulate SLC5A7. Phosphorylated by PKC and dephosphorylated by PP1/PP2A. In terms of tissue distribution, found in spinal cord, brain-stem, mid-brain and striatum. Specific for cholinergic neurons.

Its subcellular location is the presynaptic cell membrane. The protein resides in the cell projection. It is found in the axon. The protein localises to the early endosome membrane. It localises to the cytoplasmic vesicle. Its subcellular location is the secretory vesicle. The protein resides in the synaptic vesicle membrane. It catalyses the reaction choline(out) + n Na(+)(out) = choline(in) + n Na(+)(in). With respect to regulation, choline uptake activity is regulated by SLC5A7/CHT1 internalization (inactive form) from the cell surface and recycling of internalized SLC5A7/CHT1 into the cell surface (active form). Activated by extracellular chloride ion. Specifically inhibited by nanomolar concentrations of hemicholinium 3. High-affinity Na(+)-coupled choline transmembrane symporter. Functions as an electrogenic, voltage-dependent transporter with variable charge/choline stoichiometry. Choline uptake and choline-induced current is also Cl(-)-dependent where Cl(-) is likely a regulatory ion rather than cotransported ion. Plays a critical role in acetylcholine (ACh) synthesis by taking up the substrate choline from the synaptic cleft into the presynaptic nerve terminals after neurotransmitter release. SLC5A7/CHT1-mediated choline high-affinity transport in cholinergic neurons is the rate-limiting step for production of ACh, thereby facilitating communication by subsequent action potentials. Localized predominantly in presynaptic terminal intracellular organelles, and translocated to the plasma membrane in active form in response to neuronal activity. The protein is High affinity choline transporter 1 of Mus musculus (Mouse).